We begin with the raw amino-acid sequence, 253 residues long: Endonuclease NucS (253 aa).

Belongs to the NucS endonuclease family.

The protein localises to the cytoplasm. In terms of biological role, cleaves both 3' and 5' ssDNA extremities of branched DNA structures. In Pyrococcus horikoshii (strain ATCC 700860 / DSM 12428 / JCM 9974 / NBRC 100139 / OT-3), this protein is Endonuclease NucS.